An 80-amino-acid chain; its full sequence is Ribosome assembly protein 3 (80 aa).

A compositionally biased stretch (basic and acidic residues) spans methionine 1 to asparagine 10. The tract at residues methionine 1–serine 35 is disordered. Positions lysine 11–phenylalanine 26 are enriched in polar residues.

Belongs to the RSA3 family. Associates with nucleolar pre-ribosomal particles.

It is found in the nucleus. The protein localises to the nucleolus. In terms of biological role, required for efficient biogenesis of the 60S ribosomal subunit. The sequence is that of Ribosome assembly protein 3 (rsa3) from Schizosaccharomyces pombe (strain 972 / ATCC 24843) (Fission yeast).